The primary structure comprises 159 residues: Ribosomal RNA large subunit methyltransferase H (159 aa).

Residues L76, G107, and I126–L131 each bind S-adenosyl-L-methionine.

This sequence belongs to the RNA methyltransferase RlmH family. As to quaternary structure, homodimer.

Its subcellular location is the cytoplasm. It carries out the reaction pseudouridine(1915) in 23S rRNA + S-adenosyl-L-methionine = N(3)-methylpseudouridine(1915) in 23S rRNA + S-adenosyl-L-homocysteine + H(+). In terms of biological role, specifically methylates the pseudouridine at position 1915 (m3Psi1915) in 23S rRNA. The chain is Ribosomal RNA large subunit methyltransferase H from Cupriavidus metallidurans (strain ATCC 43123 / DSM 2839 / NBRC 102507 / CH34) (Ralstonia metallidurans).